The sequence spans 404 residues: Glucose-1-phosphate adenylyltransferase (404 aa).

Residues Y99, G164, 179–180 (EK), and S197 each bind alpha-D-glucose 1-phosphate.

Belongs to the bacterial/plant glucose-1-phosphate adenylyltransferase family.

The catalysed reaction is alpha-D-glucose 1-phosphate + ATP + H(+) = ADP-alpha-D-glucose + diphosphate. It participates in capsule biogenesis; capsule polysaccharide biosynthesis. It functions in the pathway glycan biosynthesis; glycogen biosynthesis. Involved in the biosynthesis of ADP-glucose, a building block, required in the biosynthesis of maltose-1-phosphate (M1P) and in the elongation reactions to produce linear alpha-1,4-glucans. Catalyzes the reaction between ATP and alpha-D-glucose 1-phosphate (G1P) to produce pyrophosphate and ADP-Glc. The sequence is that of Glucose-1-phosphate adenylyltransferase from Mycolicibacterium paratuberculosis (strain ATCC BAA-968 / K-10) (Mycobacterium paratuberculosis).